We begin with the raw amino-acid sequence, 236 residues long: 7-cyano-7-deazaguanine synthase (236 aa).

7–17 (CSGGLDSVSLA) is an ATP binding site. Cys185, Cys193, Cys196, and Cys199 together coordinate Zn(2+).

It belongs to the QueC family. Zn(2+) serves as cofactor.

The enzyme catalyses 7-carboxy-7-deazaguanine + NH4(+) + ATP = 7-cyano-7-deazaguanine + ADP + phosphate + H2O + H(+). The protein operates within purine metabolism; 7-cyano-7-deazaguanine biosynthesis. Catalyzes the ATP-dependent conversion of 7-carboxy-7-deazaguanine (CDG) to 7-cyano-7-deazaguanine (preQ(0)). This Rhizobium leguminosarum bv. trifolii (strain WSM2304) protein is 7-cyano-7-deazaguanine synthase.